A 100-amino-acid chain; its full sequence is Urease subunit gamma (100 aa).

The protein belongs to the urease gamma subunit family. In terms of assembly, heterotrimer of UreA (gamma), UreB (beta) and UreC (alpha) subunits. Three heterotrimers associate to form the active enzyme.

It localises to the cytoplasm. The catalysed reaction is urea + 2 H2O + H(+) = hydrogencarbonate + 2 NH4(+). It functions in the pathway nitrogen metabolism; urea degradation; CO(2) and NH(3) from urea (urease route): step 1/1. This is Urease subunit gamma from Methylibium petroleiphilum (strain ATCC BAA-1232 / LMG 22953 / PM1).